The sequence spans 382 residues: Putative acetyl-CoA C-acetyltransferase VraB (382 aa).

The Acyl-thioester intermediate role is filled by cysteine 86. Histidine 338 acts as the Proton acceptor in catalysis.

It belongs to the thiolase-like superfamily. Thiolase family.

This chain is Putative acetyl-CoA C-acetyltransferase VraB (vraB), found in Staphylococcus epidermidis (strain ATCC 35984 / DSM 28319 / BCRC 17069 / CCUG 31568 / BM 3577 / RP62A).